A 259-amino-acid chain; its full sequence is Exosome complex component Rrp42 (259 aa).

This sequence belongs to the RNase PH family. Rrp42 subfamily. In terms of assembly, component of the archaeal exosome complex. Forms a hexameric ring-like arrangement composed of 3 Rrp41-Rrp42 heterodimers. The hexameric ring associates with a trimer of Rrp4 and/or Csl4 subunits.

Its subcellular location is the cytoplasm. Its function is as follows. Non-catalytic component of the exosome, which is a complex involved in RNA degradation. Contributes to the structuring of the Rrp41 active site. This Archaeoglobus fulgidus (strain ATCC 49558 / DSM 4304 / JCM 9628 / NBRC 100126 / VC-16) protein is Exosome complex component Rrp42.